We begin with the raw amino-acid sequence, 462 residues long: MAATVNLELDPIFLKALGFLHSKSKDSAEKLKALLDESLARGIDSSYRPSQKDVEPPKISSTKNISIKQEPKISSSLPSGNNNGKVLTTEKVKKEAEKRPADKMKSDITEGVDIPKKPRLEKPETQSSPITVQSSKDLPMADLSSFEETSADDFAMEMGLACVVCRQMMVASGNQLVECQECHNLYHRDCHKPQVTDKEANDPRLVWYCARCTRQMKRMAQKTQKPPQKPAPAVVSVTPAVKDPLVKKPETKLKQETTFLAFKRTEVKTSTVISGNSSSASVSSSVTSGLTGWAAFAAKTSSAGPSTAKLSSTTQNNTGKPATSSANQKPVGLTGLATSSKGGIGSKIGSNNSTTPTVPLKPPPPLTLGKTGLSRSVSCDNVSKVGLPSPSSLVPGSSSQLSGNGNSGTSGPSGSTTSKTTSESSSSPSASLKGPTSQESQLNAMKRLQMVKKKAAQKKLKK.

The segment at 42 to 132 is disordered; sequence GIDSSYRPSQ…PETQSSPITV (91 aa). Over residues 59–86 the composition is skewed to polar residues; sequence ISSTKNISIKQEPKISSSLPSGNNNGKV. Lysine 68 is covalently cross-linked (Glycyl lysine isopeptide (Lys-Gly) (interchain with G-Cter in SUMO2)). The segment covering 88 to 124 has biased composition (basic and acidic residues); sequence TTEKVKKEAEKRPADKMKSDITEGVDIPKKPRLEKPE. Serine 128 carries the post-translational modification Phosphoserine. The PHD-type zinc-finger motif lies at 159 to 215; that stretch reads GLACVVCRQMMVASGNQLVECQECHNLYHRDCHKPQVTDKEANDPRLVWYCARCTRQ. Residue lysine 254 forms a Glycyl lysine isopeptide (Lys-Gly) (interchain with G-Cter in SUMO2) linkage. Polar residues predominate over residues 301–328; it reads SSAGPSTAKLSSTTQNNTGKPATSSANQ. The segment at 301-462 is disordered; sequence SSAGPSTAKL…KKAAQKKLKK (162 aa). Low complexity-rich tracts occupy residues 347-358 and 382-437; these read KIGSNNSTTPTV and VSKV…GPTS. The segment covering 449-462 has biased composition (basic residues); that stretch reads QMVKKKAAQKKLKK.

It belongs to the Integrator subunit 12 family. As to quaternary structure, component of the Integrator complex, composed of core subunits INTS1, INTS2, INTS3, INTS4, INTS5, INTS6, INTS7, INTS8, INTS9/RC74, INTS10, INTS11/CPSF3L, INTS12, INTS13, INTS14 and INTS15. The core complex associates with protein phosphatase 2A subunits PPP2CA and PPP2R1A, to form the Integrator-PP2A (INTAC) complex. Post-translationally, dephosphorylated at Ser-128 by the PNUTS-PP1 complex, promoting RNA polymerase II transcription pause-release.

The protein localises to the nucleus. Component of the integrator complex, a multiprotein complex that terminates RNA polymerase II (Pol II) transcription in the promoter-proximal region of genes. The integrator complex provides a quality checkpoint during transcription elongation by driving premature transcription termination of transcripts that are unfavorably configured for transcriptional elongation: the complex terminates transcription by (1) catalyzing dephosphorylation of the C-terminal domain (CTD) of Pol II subunit POLR2A/RPB1 and SUPT5H/SPT5, (2) degrading the exiting nascent RNA transcript via endonuclease activity and (3) promoting the release of Pol II from bound DNA. The integrator complex is also involved in terminating the synthesis of non-coding Pol II transcripts, such as enhancer RNAs (eRNAs), small nuclear RNAs (snRNAs), telomerase RNAs and long non-coding RNAs (lncRNAs). Mediates recruitment of cytoplasmic dynein to the nuclear envelope, probably as component of the integrator complex. The chain is Integrator complex subunit 12 from Homo sapiens (Human).